A 368-amino-acid polypeptide reads, in one-letter code: Histidinol-phosphate aminotransferase (368 aa).

Lys-228 carries the post-translational modification N6-(pyridoxal phosphate)lysine.

Belongs to the class-II pyridoxal-phosphate-dependent aminotransferase family. Histidinol-phosphate aminotransferase subfamily. Homodimer. Pyridoxal 5'-phosphate serves as cofactor.

The enzyme catalyses L-histidinol phosphate + 2-oxoglutarate = 3-(imidazol-4-yl)-2-oxopropyl phosphate + L-glutamate. Its pathway is amino-acid biosynthesis; L-histidine biosynthesis; L-histidine from 5-phospho-alpha-D-ribose 1-diphosphate: step 7/9. The protein is Histidinol-phosphate aminotransferase (hisC) of Methylobacillus flagellatus.